We begin with the raw amino-acid sequence, 268 residues long: Taurine import ATP-binding protein TauB (268 aa).

Residues 4–236 (LSIENISMRF…MGVNADLREV (233 aa)) form the ABC transporter domain. Residue 41–48 (GPSGCGKT) participates in ATP binding.

The protein belongs to the ABC transporter superfamily. Taurine importer (TC 3.A.1.17.1) family. In terms of assembly, the complex is composed of two ATP-binding proteins (TauB), two transmembrane proteins (TauC) and a solute-binding protein (TauA).

It is found in the cell inner membrane. The catalysed reaction is taurine(out) + ATP + H2O = taurine(in) + ADP + phosphate + H(+). Its function is as follows. Part of the ABC transporter complex TauABC involved in taurine import. Responsible for energy coupling to the transport system. This is Taurine import ATP-binding protein TauB from Ruegeria pomeroyi (strain ATCC 700808 / DSM 15171 / DSS-3) (Silicibacter pomeroyi).